A 301-amino-acid polypeptide reads, in one-letter code: Cytosolic sulfotransferase 2 (301 aa).

53–58 (KAGTTW) is a binding site for 3'-phosphoadenylyl sulfate. The active-site Proton acceptor is His115. 3'-phosphoadenylyl sulfate-binding positions include Arg137, Ser145, Tyr201, 235-240 (VQFDVM), and 263-265 (RKG).

Belongs to the sulfotransferase 1 family. Expressed in liver.

It is found in the cytoplasm. With respect to regulation, inhibited by Co(2+), Zn(2+), Cd(2+) and Pb(2+) ions. Inactivated by Hg(2+) and Cu(2+) ions. Its function is as follows. Sulfotransferase that utilizes 3'-phospho-5'-adenylyl sulfate (PAPS) as sulfonate donor to catalyze the sulfate conjugation of a variety of xenobiotic and endogenous compounds, including 2-naphthol, hydroxychlorobiphenyls, T3 (triiodo-L-thyronine), T4 (thyroxine), estrone and DOPA. This Danio rerio (Zebrafish) protein is Cytosolic sulfotransferase 2.